Consider the following 1005-residue polypeptide: Beta-galactosidase (1005 aa).

E455 acts as the Proton donor in catalysis. The active-site Nucleophile is the E526.

It belongs to the glycosyl hydrolase 2 family.

The enzyme catalyses Hydrolysis of terminal non-reducing beta-D-galactose residues in beta-D-galactosides.. The protein is Beta-galactosidase (lacZ) of Actinobacillus pleuropneumoniae (Haemophilus pleuropneumoniae).